A 335-amino-acid chain; its full sequence is Ketol-acid reductoisomerase (NADP(+)) 2 (335 aa).

The KARI N-terminal Rossmann domain maps to 1–180; that stretch reads MKTYYEKDAN…GCTRAGVIET (180 aa). NADP(+) is bound by residues 24-27, R47, S51, and 81-84; these read YGSQ and DEQQ. The active site involves H106. G132 serves as a coordination point for NADP(+). Residues 181-326 enclose the KARI C-terminal knotted domain; that stretch reads TFQEETETDL…AELREMMSWI (146 aa). Positions 189, 193, 225, and 229 each coordinate Mg(2+). S250 provides a ligand contact to substrate.

This sequence belongs to the ketol-acid reductoisomerase family. Mg(2+) is required as a cofactor.

It carries out the reaction (2R)-2,3-dihydroxy-3-methylbutanoate + NADP(+) = (2S)-2-acetolactate + NADPH + H(+). The enzyme catalyses (2R,3R)-2,3-dihydroxy-3-methylpentanoate + NADP(+) = (S)-2-ethyl-2-hydroxy-3-oxobutanoate + NADPH + H(+). Its pathway is amino-acid biosynthesis; L-isoleucine biosynthesis; L-isoleucine from 2-oxobutanoate: step 2/4. The protein operates within amino-acid biosynthesis; L-valine biosynthesis; L-valine from pyruvate: step 2/4. Functionally, involved in the biosynthesis of branched-chain amino acids (BCAA). Catalyzes an alkyl-migration followed by a ketol-acid reduction of (S)-2-acetolactate (S2AL) to yield (R)-2,3-dihydroxy-isovalerate. In the isomerase reaction, S2AL is rearranged via a Mg-dependent methyl migration to produce 3-hydroxy-3-methyl-2-ketobutyrate (HMKB). In the reductase reaction, this 2-ketoacid undergoes a metal-dependent reduction by NADPH to yield (R)-2,3-dihydroxy-isovalerate. In Bacillus cereus (strain ZK / E33L), this protein is Ketol-acid reductoisomerase (NADP(+)) 2.